The following is a 348-amino-acid chain: Protein-arginine N-acetylglucosaminyltransferase SseK2 (348 aa).

UDP-N-acetyl-alpha-D-glucosamine contacts are provided by residues 64–66 (QWF), Y88, and 237–240 (YLDA). A DXD motif motif is present at residues 239-241 (DAD). Residue D241 coordinates Mn(2+). E271 serves as the catalytic Proton acceptor. Residues N338, S340, and 345-348 (SSWR) contribute to the UDP-N-acetyl-alpha-D-glucosamine site. Mn(2+) contacts are provided by N338 and S340.

It belongs to the glycosyltransferase NleB family. Mn(2+) serves as cofactor.

It is found in the secreted. It localises to the host Golgi apparatus. The enzyme catalyses L-arginyl-[protein] + UDP-N-acetyl-alpha-D-glucosamine = N(omega)-(N-acetyl-beta-D-glucosaminyl)-L-arginyl-[protein] + UDP + H(+). Protein-arginine N-acetylglucosaminyltransferase activity is inhibited by 100066N compound (flavone analog) and 102644N compound (a substituted isoxazole). Protein-arginine N-acetylglucosaminyltransferase effector that catalyzes the transfer of a single N-acetylglucosamine (GlcNAc) to a conserved arginine residue in the death domain of host proteins such as FADD: arginine GlcNAcylation prevents homotypic/heterotypic death domain interactions. Also acts on host proteins without a death domain: catalyzes arginine GlcNAcylation of host small Rab1 GTPase, thereby preventing GTPase activity and leading to impaired host vesicular protein transport. In contrast to Ssek1, not able to disrupt TNF signaling in infected cells. The protein is Protein-arginine N-acetylglucosaminyltransferase SseK2 of Salmonella typhimurium (strain SL1344).